We begin with the raw amino-acid sequence, 101 residues long: MDKSKRLFTKSKRSFRRRLPPIQSGDRIDYRNMSLISRFISEQGKILSRRVNRLTLKQQRLITIAIKQARILSSLPFLNNEKQFERSESTTKTTGLRTRNK.

Belongs to the bacterial ribosomal protein bS18 family. Part of the 30S ribosomal subunit.

The protein resides in the plastid. It localises to the chloroplast. The chain is Small ribosomal subunit protein bS18c from Carica papaya (Papaya).